We begin with the raw amino-acid sequence, 71 residues long: UPF0346 protein SZO_05010 (71 aa).

This sequence belongs to the UPF0346 family.

The sequence is that of UPF0346 protein SZO_05010 from Streptococcus equi subsp. zooepidemicus (strain H70).